The chain runs to 321 residues: Glucokinase (321 aa).

8–13 contacts ATP; the sequence is GDVGGT.

The protein belongs to the bacterial glucokinase family.

It is found in the cytoplasm. It carries out the reaction D-glucose + ATP = D-glucose 6-phosphate + ADP + H(+). The protein is Glucokinase of Salmonella typhi.